The chain runs to 328 residues: NADH-quinone oxidoreductase subunit H (328 aa).

The next 8 membrane-spanning stretches (helical) occupy residues 10–30 (IIKI…GTYF), 80–100 (IAPV…PFLP), 118–138 (IGIL…LLGG), 155–175 (AVFI…IMMV), 191–211 (ITSW…IAAF), 243–263 (LFFI…SLLF), 272–292 (LLGA…FLWT), and 306–326 (WLCW…TAIV).

It belongs to the complex I subunit 1 family. In terms of assembly, NDH-1 is composed of 14 different subunits. Subunits NuoA, H, J, K, L, M, N constitute the membrane sector of the complex.

Its subcellular location is the cell inner membrane. It catalyses the reaction a quinone + NADH + 5 H(+)(in) = a quinol + NAD(+) + 4 H(+)(out). Its function is as follows. NDH-1 shuttles electrons from NADH, via FMN and iron-sulfur (Fe-S) centers, to quinones in the respiratory chain. The immediate electron acceptor for the enzyme in this species is believed to be ubiquinone. Couples the redox reaction to proton translocation (for every two electrons transferred, four hydrogen ions are translocated across the cytoplasmic membrane), and thus conserves the redox energy in a proton gradient. This subunit may bind ubiquinone. This Sulfurimonas denitrificans (strain ATCC 33889 / DSM 1251) (Thiomicrospira denitrificans (strain ATCC 33889 / DSM 1251)) protein is NADH-quinone oxidoreductase subunit H.